A 447-amino-acid chain; its full sequence is Cobyrinate a,c-diamide synthase (447 aa).

Residues 252 to 439 (KIAVAFDESF…AHQHCIGNPY (188 aa)) form the GATase cobBQ-type domain. The active-site Nucleophile is the C331.

This sequence belongs to the CobB/CbiA family. The cofactor is Mg(2+).

The catalysed reaction is cob(II)yrinate + 2 L-glutamine + 2 ATP + 2 H2O = cob(II)yrinate a,c diamide + 2 L-glutamate + 2 ADP + 2 phosphate + 2 H(+). It catalyses the reaction Ni-sirohydrochlorin + 2 L-glutamine + 2 ATP + 2 H2O = Ni-sirohydrochlorin a,c-diamide + 2 L-glutamate + 2 ADP + 2 phosphate + 2 H(+). Its pathway is cofactor biosynthesis; adenosylcobalamin biosynthesis; cob(II)yrinate a,c-diamide from sirohydrochlorin (anaerobic route): step 10/10. Catalyzes the ATP-dependent amidation of the two carboxylate groups at positions a and c of cobyrinate, using either L-glutamine or ammonia as the nitrogen source. Involved in the biosynthesis of the unique nickel-containing tetrapyrrole coenzyme F430, the prosthetic group of methyl-coenzyme M reductase (MCR), which plays a key role in methanogenesis and anaerobic methane oxidation. Catalyzes the ATP-dependent amidation of the two carboxylate groups at positions a and c of Ni-sirohydrochlorin, using L-glutamine or ammonia as the nitrogen source. In Methanococcus maripaludis (strain C5 / ATCC BAA-1333), this protein is Cobyrinate a,c-diamide synthase.